The primary structure comprises 209 residues: High-affinity nitrate transporter 3.2 (209 aa).

The first 22 residues, 1–22, serve as a signal peptide directing secretion; that stretch reads MAIHTLLFVSLLIFSLIESSSG. A helical transmembrane segment spans residues 177 to 197; that stretch reads LDIASTFFSVFSVVSLFVFFV.

The protein belongs to the NAR2 family. In terms of tissue distribution, bearly detected in roots and shoots.

It is found in the cell membrane. Its function is as follows. Acts as a dual component transporter with NTR2.1. Required for high-affinity nitrate transport. This is High-affinity nitrate transporter 3.2 from Arabidopsis thaliana (Mouse-ear cress).